The sequence spans 115 residues: Large ribosomal subunit protein uL24 (115 aa).

It belongs to the universal ribosomal protein uL24 family. As to quaternary structure, part of the 50S ribosomal subunit.

Its function is as follows. One of two assembly initiator proteins, it binds directly to the 5'-end of the 23S rRNA, where it nucleates assembly of the 50S subunit. Functionally, one of the proteins that surrounds the polypeptide exit tunnel on the outside of the subunit. The protein is Large ribosomal subunit protein uL24 of Deinococcus geothermalis (strain DSM 11300 / CIP 105573 / AG-3a).